The following is a 309-amino-acid chain: Protein FdhE (309 aa).

This sequence belongs to the FdhE family.

Its subcellular location is the cytoplasm. In terms of biological role, necessary for formate dehydrogenase activity. The polypeptide is Protein FdhE (Shigella boydii serotype 18 (strain CDC 3083-94 / BS512)).